The primary structure comprises 181 residues: CASP-like protein 2C1 (181 aa).

Over Met1–Lys7 the chain is Cytoplasmic. A helical membrane pass occupies residues Ile8–Gly28. Over Leu29–His49 the chain is Extracellular. Residues Ala50–Cys70 form a helical membrane-spanning segment. Topologically, residues Arg71–Gln98 are cytoplasmic. Residues Leu99–Ile119 traverse the membrane as a helical segment. Over Thr120–Gln140 the chain is Extracellular. The chain crosses the membrane as a helical span at residues Ile141–Ile161. Residues Ser162–Thr181 lie on the Cytoplasmic side of the membrane.

The protein belongs to the Casparian strip membrane proteins (CASP) family. Homodimer and heterodimers.

It is found in the cell membrane. The chain is CASP-like protein 2C1 from Populus trichocarpa (Western balsam poplar).